We begin with the raw amino-acid sequence, 873 residues long: Alanine--tRNA ligase (873 aa).

The Zn(2+) site is built by H562, H566, C664, and H668.

Belongs to the class-II aminoacyl-tRNA synthetase family. Zn(2+) serves as cofactor.

It is found in the cytoplasm. It carries out the reaction tRNA(Ala) + L-alanine + ATP = L-alanyl-tRNA(Ala) + AMP + diphosphate. In terms of biological role, catalyzes the attachment of alanine to tRNA(Ala) in a two-step reaction: alanine is first activated by ATP to form Ala-AMP and then transferred to the acceptor end of tRNA(Ala). Also edits incorrectly charged Ser-tRNA(Ala) and Gly-tRNA(Ala) via its editing domain. This is Alanine--tRNA ligase from Photobacterium profundum (strain SS9).